The chain runs to 237 residues: MTDPENNDQLVKSSDPEHPANLIPELCKKFYTLGWVTGTGGGTSIRRGDHIFIAPSGVQKEMIKSEDIFVLSYPTPKYPPSARQYIRKPRELKPSACTPLFLAAFDRGAGCSIHTHSQWAVLVTLLVEREKGKNGCFEINNIEQIKGIPKGKGKGMLGYFDTLRIPIIENTAFEEDLTESLEQAMDEYPDTYAVLVRRHGIYVWGDTPAKAKTQCESLDYLFQLAVEMHKLGIPWIQ.

C97 serves as a coordination point for substrate. Zn(2+) contacts are provided by H114 and H116. E143 acts as the Proton donor/acceptor in catalysis. H199 serves as a coordination point for Zn(2+).

Belongs to the aldolase class II family. MtnB subfamily. It depends on Zn(2+) as a cofactor.

The protein localises to the cytoplasm. The enzyme catalyses 5-(methylsulfanyl)-D-ribulose 1-phosphate = 5-methylsulfanyl-2,3-dioxopentyl phosphate + H2O. It functions in the pathway amino-acid biosynthesis; L-methionine biosynthesis via salvage pathway; L-methionine from S-methyl-5-thio-alpha-D-ribose 1-phosphate: step 2/6. Its function is as follows. Catalyzes the dehydration of methylthioribulose-1-phosphate (MTRu-1-P) into 2,3-diketo-5-methylthiopentyl-1-phosphate (DK-MTP-1-P). This is Methylthioribulose-1-phosphate dehydratase from Coccidioides posadasii (strain C735) (Valley fever fungus).